We begin with the raw amino-acid sequence, 139 residues long: Large ribosomal subunit protein uL16 (139 aa).

Positions 1 to 20 (MLMPRRVKHRKQHHPTRRGA) are enriched in basic residues. The disordered stretch occupies residues 1–24 (MLMPRRVKHRKQHHPTRRGAAKGG).

The protein belongs to the universal ribosomal protein uL16 family. Part of the 50S ribosomal subunit.

Binds 23S rRNA and is also seen to make contacts with the A and possibly P site tRNAs. This chain is Large ribosomal subunit protein uL16, found in Nocardioides sp. (strain ATCC BAA-499 / JS614).